The primary structure comprises 2039 residues: MQGRKRTLTEPFEPNTNPFGDNAAVMTENVEDNSETDGNRLESKPQALVPPALNIVPPESSIHSTEEKKGDEYNGNDKDSSLISNIFRTRVGRSSHENLSRPKLSLKTASFGAAESSRRNVSPSTKSAKSSSQYIDLNDERLRRRSFSSYSRSSSRRVSNSPSSTDRPPRSAKVLSLIAADDMDDFEDLQKGFKSAIDEEGLTWLPQLKSEKSRPVSDVGEDRGEGEQESIPDVHTPNVGASATPGSIHLTPEPAQNGSVSEGLEGSINNSRKKPSPKFFHHLSPQKEDKDQTEVIEYAEDILDFETLQRKLESRPFVLYGHSLGVFSPTNPLRIKIARFLLHRRYSLLYNTLLTFYAILLAIRTYNPHNVVFLYRFSNWTDYFIFILSACFTGNDIAKIIAFGFWDDSEMFKAYGREYKSILQRSGIMKLYIYLREKYGRKLIDFIIPFRIISPGEETKYQRSSLSTSLTKPYGAKENQRPFGTPRAFARSSWNRIDLVSSVSFWLGMFLSIKSYDTKTGIRIFKPLAILRILRLVNVDTGMPSILRGLKYGIPQLVNVSSMLVYFWIFFGILGVQIFQGSFRRQCVWFNPEDPTDTYQYDMQFCGGYLDPVTKRKQNYIYEDGSEGSVSKGFLCPQYSKCVSNANPYNGRISFDNIVNSMELVFVIMSANTFTDLMYYTMDSDEMAACLFFIVCIFVLTIWLLNLLIAVLVSSFEIANEEYKKKKFIYGSRKTGYVARIVTGYWKYFKLKANQTKFPNWSQKGLAIYSHVEFIFVILIICDIGMRASVKVSTSANCNNILLKTDRGISIVLFIESLARLVLYLPNMWKFLTKPSYVYDFIISIITLVISCLAVEGVLGHMYAWLSIFHISRFYRVIISFNLTKKLWKQILSNGVMIWNLSSFYFFFTFLVAIIMAVYFEGVIPPEEMADQPFGMYSLPNSFLSLFIIGSTENWTDILYALQKHSPNISSTFFCSVFFIIWFLLSNSVILNIFIALISESMEVKEEEKRPQQIKHYLKFVYPQKIQEYTHASLVARIRKKFFGGHRNEDTRDFKQFLMRGTAIMNIAQNMGELADEFKEPPSENLFKKGLSKLTIGVPSLKRLRMFANNPFYKNSDVVFTETNDINGRTYILELNEYEDEKLDYLKKYPLFNYSYYFFSPQHRFRRFCQRLVPPSTGKRTDGSRFFEDSTDLYNKRSYFHHIERDVFVFIFALATILLIVCSCYVTPLYRMHHKMGTWNWSSALDCAFIGAFSIEFIVKTVADGFIYSPNAYLRNPWNFIDFCVLISMWINLIAYLKNNGNLSRIFKGLTALRALRCLTISNTARQTFNLVMFDGLNKIFEAGLISLSLLFPFTVWGLSIFKGRLGTCNDGSLGRADCYNEYSNSVFQWDIMSPRVYQQPYLHLDSFASAFSSLYQIISLEGWVDLLENMMNSSGIGTPATVMGSAGNALFLVLFNFLSMVFILNLFVSFIVNNQARTTGSAYFTIEEKAWLESQKLLSQAKPKAIPNLIELSRVRQFFYQLAVEKKNFYYASFLQVVLYLHIIMLLSRSYNPGNLIGYQGVYFMFSTSVFLIQEALHMCGEGPRLYFRQKWNSIRLSIIIIAFIMNAVAFHVPASHYWFHNIKGFFLLVIFLFIIPQNDTLTELLETAMASLPPILSLTYTWGVLFLVYAIALNQIFGLTRLGSNTTDNINFRTVIKSMIVLFRCSFGEGWNYIMADLTVSEPYCSSDDNSTYTDCGSETYAYLLLMSWNIISMYIFVNMFVSLIIGNFSYVYRSGGSRSGINRSEIKKYIEAWSKFDTDGTGELELSYLPRIMHSFDGPLSFKIWEGRLTIKSLVENYMEVNPDDPYDVKIDLIGLNKELNTIDKAKIIQRKLQYRRFVQSIHYTNAYNGCIRFSDLLLQIPLYTAYSARECLGIDQYVHHLYILGKVDKYLENQRNFDVLEMVVTRWKFHCRMKRTIEPEWDVKDPTVSSHISNINVNLEPAPGILEREPIATPRMDYGVNNFMWSPRMNQDSTMEPPEEPIDNNDDSANDLIDR.

2 disordered regions span residues 1 to 171 and 206 to 288; these read MQGR…PPRS and PQLK…PQKE. The span at 64 to 80 shows a compositional bias: basic and acidic residues; sequence STEEKKGDEYNGNDKDS. N-linked (GlcNAc...) asparagine glycosylation is present at Asn98. Low complexity-rich tracts occupy residues 122 to 132 and 147 to 164; these read SPSTKSAKSSS and FSSY…SPSS. Residues 209–226 are compositionally biased toward basic and acidic residues; the sequence is KSEKSRPVSDVGEDRGEG. N-linked (GlcNAc...) asparagine glycans are attached at residues Asn257 and Asn269. Residues 271–281 are compositionally biased toward basic residues; the sequence is SRKKPSPKFFH. Residue Ser284 is modified to Phosphoserine. A helical transmembrane segment spans residues 346-366; the sequence is YSLLYNTLLTFYAILLAIRTY. An N-linked (GlcNAc...) asparagine glycan is attached at Asn379. The chain crosses the membrane as a helical span at residues 384-404; the sequence is FIFILSACFTGNDIAKIIAFG. A glycan (N-linked (GlcNAc...) asparagine) is linked at Asn559. 3 helical membrane-spanning segments follow: residues 563–583, 658–678, and 691–711; these read MLVY…QGSF, IVNS…TDLM, and LFFI…LIAV. Residues Asn754 and Asn760 are each glycosylated (N-linked (GlcNAc...) asparagine). 3 consecutive transmembrane segments (helical) span residues 766–786, 809–829, and 841–861; these read LAIY…DIGM, ISIV…PNMW, and FIIS…VLGH. Residues Asn882 and Asn900 are each glycosylated (N-linked (GlcNAc...) asparagine). Transmembrane regions (helical) follow at residues 904–924 and 942–962; these read FYFF…EGVI and SFLS…LYAL. Asn968 carries N-linked (GlcNAc...) asparagine glycosylation. Residues 978 to 998 traverse the membrane as a helical segment; the sequence is FFIIWFLLSNSVILNIFIALI. N-linked (GlcNAc...) asparagine glycosylation occurs at Asn1153. The helical transmembrane segment at 1207 to 1227 threads the bilayer; the sequence is VFVFIFALATILLIVCSCYVT. Asn1240 carries N-linked (GlcNAc...) asparagine glycosylation. The next 2 helical transmembrane spans lie at 1247-1267 and 1277-1297; these read CAFI…DGFI and PWNF…IAYL. Asn1302 is a glycosylation site (N-linked (GlcNAc...) asparagine). 2 helical membrane-spanning segments follow: residues 1340–1360 and 1408–1428; these read IFEA…WGLS and FASA…VDLL. N-linked (GlcNAc...) asparagine glycosylation is present at Asn1433. Transmembrane regions (helical) follow at residues 1452–1472, 1529–1549, 1554–1574, 1596–1616, and 1618–1638; these read FLVL…VSFI, NFYY…MLLS, PGNL…VFLI, IRLS…HVPA, and HYWF…FIIP. Asn1640 is a glycosylation site (N-linked (GlcNAc...) asparagine). The chain crosses the membrane as a helical span at residues 1654-1674; that stretch reads LPPILSLTYTWGVLFLVYAIA. Asn1687 and Asn1732 each carry an N-linked (GlcNAc...) asparagine glycan. The helical transmembrane segment at 1748–1768 threads the bilayer; it reads LMSWNIISMYIFVNMFVSLII. Residues Asn1770 and Asn1785 are each glycosylated (N-linked (GlcNAc...) asparagine). The region spanning 1787–1822 is the EF-hand domain; it reads SEIKKYIEAWSKFDTDGTGELELSYLPRIMHSFDGP. A disordered region spans residues 2011–2039; that stretch reads PRMNQDSTMEPPEEPIDNNDDSANDLIDR. Residues 2021–2033 show a composition bias toward acidic residues; sequence PPEEPIDNNDDSA.

Belongs to the calcium channel alpha-1 subunit (TC 1.A.1.11) family. As to quaternary structure, interacts with MID1 to form a Ca(2+) influx channel.

Its subcellular location is the cell membrane. Its function is as follows. Voltage-gated, high-affinity calcium channel that functions together with MID1 to mediate calcium entry into cells. Required during conditions of environmental stress. The chain is Calcium-channel protein CCH1 (CCH1) from Saccharomyces cerevisiae (strain ATCC 204508 / S288c) (Baker's yeast).